We begin with the raw amino-acid sequence, 314 residues long: tRNA pseudouridine synthase B (314 aa).

A substrate-binding site is contributed by histidine 43. Aspartate 48 (nucleophile) is an active-site residue. Residues tyrosine 76, tyrosine 179, and leucine 200 each contribute to the substrate site.

Belongs to the pseudouridine synthase TruB family. Type 1 subfamily.

The enzyme catalyses uridine(55) in tRNA = pseudouridine(55) in tRNA. Responsible for synthesis of pseudouridine from uracil-55 in the psi GC loop of transfer RNAs. In Citrobacter koseri (strain ATCC BAA-895 / CDC 4225-83 / SGSC4696), this protein is tRNA pseudouridine synthase B.